A 1834-amino-acid chain; its full sequence is MKLSVNEAQLGFYLGSLSHLSACPGIDPRSSEDQPESLKTGQMMDESDEDFKELCASFFQRVKKHGIKEVSGERKTQKAASNGTQIRSKLKRTKQTATKTKTLQGPAEKKPPSGSQAPRTKKQRVTKWQASEPAHSVNGEGGVLASAPDPPVLRETAQNTQTGNQQEPSPNLSREKTRENVPNSDSQPPPSCLTTAVPSPSKPRTAQLVLQRMQQFKRADPERLRHASEECSLEAAREENVPKDPQEEMMAGNVYGLGPPAPESDAAVALTLQQEFARVGASAHDDSLEEKGLFFCQICQKNLSAMNVTRREQHVNRCLDEAEKTLRPSVPQIPECPICGKPFLTLKSRTSHLKQCAVKMEVGPQLLLQAVRLQTAQPEGSSSPPMFSFSDHSRGLKRRGPTSKKEPRKRRKVDEAPSEDLLVAMALSRSEMEPGAAVPALRLESAFSERIRPEAENKSRKKKPPVSPPLLLVQDSETTGRQIEDRVALLLSEEVELSSTPPLPASRILKEGWERAGQCPPPPERKQSFLWEGSALTGAWAMEDFYTARLVPPLVPQRPAQGLMQEPVPPLVPPEHSELSERRSPALHGTPTAGCGSRGPSPSASQREHQALQDLVDLAREGLSASPWPGSGGLAGSEGTAGLDVVPGGLPLTGFVVPSQDKHPDRGGRTLLSLGLLVADFGAMVNNPHLSDVQFQTDSGEVLYAHKFVLYARCPLLIQYVNNEGFSAVEDGVLTQRVLLGDVSTEAARTFLHYLYTADTGLPPGLSSELSSLAHRFGVSELVHLCEQVPIATDSEGKPWEEKEAENCESRAENFQELLRSMWADEEEEAETLLKSKDHEEDQENVNEAEMEEIYEFAATQRKLLQEERAAGAGEDADWLEGGSPVSGQLLAGVQVQKQWDKVEEMEPLEPGRDEAATTWEKMGQCALPPPQGQHSGARGAEAPEQEAPEEALGHSSCSSPSRDCQAERKEGSLPHSDDAGDYEQLFSSTQGEISEPSQITSEPEEQSGAVRERGLEVSHRLAPWQASPPHPCRFLLGPPQGGSPRGSHHTSGSSLSTPRSRGGTSQVGSPTLLSPAVPSKQKRDRSILTLSKEPGHQKGKERRSVLECRNKGVLMFPEKSPSIDLTQSNPDHSSSRSQKSSSKLNEEDEVILLLDSDEELELEQTKMKSISSDPLEEKKALEISPRSCELFSIIDVDADQEPSQSPPRSEAVLQQEDEGALPENRGSLGRRGAPWLFCDRESSPSEASTTDTSWLVPATPLASRSRDCSSQTQISSLRSGLAVQAVTQHTPRASVGNREGNEVAQKFSVIRPQTPPPQTPSSCLTPVSPGTSDGRRQGHRSPSRPHPGGHPHSSPLAPHPISGDRAHFSRRFLKHSPPGPSFLNQTPAGEVVEVGDSDDEQEVASHQANRSPPLDSDPPIPIDDCCWHMEPLSPIPIDHWNLERTGPLSTSSPSRRMNEAADSRDCRSPGLLDTTPIRGSCTTQRKLQEKSSGAGSLGNSRPSFLNSALWDVWDGEEQRPPETPPPAQMPSAGGAQKPEGLETPKGANRKKNLPPKVPITPMPQYSIMETPVLKKELDRFGVRPLPKRQMVLKLKEIFQYTHQTLDSDSEDESQSSQPLLQAPHCQTLASQTYKPSRAGVHAQQEATTGPGAHRPKGPAKTKGPRHQRKHHESITPPSRSPTKEAPPGLNDDAQIPASQESVATSVDGSDSSLSSQSSSSCEFGAAFESAGEEEGEGEVSASQAAVQAADTDEALRCYIRSKPALYQKVLLYQPFELRELQAELRQNGLRVSSRRLLDFLDTHCITFTTAATRREKLQGRRRQPRGKKKVERN.

The interval 1-669 is interaction with SLX4IP, ERCC4/XPF and MSH2; the sequence is MKLSVNEAQL…QDKHPDRGGR (669 aa). The segment at 24 to 49 is disordered; the sequence is PGIDPRSSEDQPESLKTGQMMDESDE. Residue Lys68 forms a Glycyl lysine isopeptide (Lys-Gly) (interchain with G-Cter in SUMO2) linkage. Residues 69–206 form a disordered region; that stretch reads EVSGERKTQK…VPSPSKPRTA (138 aa). Residues 78–87 show a composition bias toward polar residues; sequence KAASNGTQIR. Residues 95–104 are compositionally biased toward low complexity; that stretch reads QTATKTKTLQ. Polar residues-rich tracts occupy residues 156–172 and 180–204; these read TAQNTQTGNQQEPSPNL and NVPNSDSQPPPSCLTTAVPSPSKPR. Position 169 is a phosphoserine (Ser169). Position 287 is a phosphoserine (Ser287). A Glycyl lysine isopeptide (Lys-Gly) (interchain with G-Cter in SUMO2) cross-link involves residue Lys291. 2 consecutive UBZ4-type zinc fingers follow at residues 293–323 and 333–361; these read LFFCQICQKNLSAMNVTRREQHVNRCLDEAE and IPECPICGKPFLTLKSRTSHLKQCAVKME. 6 residues coordinate Zn(2+): Cys296, Cys299, His314, Cys318, Cys336, and Cys339. Lys347 participates in a covalent cross-link: Glycyl lysine isopeptide (Lys-Gly) (interchain with G-Cter in SUMO2). Residues His352 and Cys356 each coordinate Zn(2+). A Glycyl lysine isopeptide (Lys-Gly) (interchain with G-Cter in SUMO2) cross-link involves residue Lys359. Polar residues predominate over residues 376–385; that stretch reads AQPEGSSSPP. 3 disordered regions span residues 376 to 417, 452 to 471, and 561 to 610; these read AQPE…DEAP, RPEAENKSRKKKPPVSPPLL, and QGLM…REHQ. The span at 395–411 shows a compositional bias: basic residues; the sequence is GLKRRGPTSKKEPRKRR. Glycyl lysine isopeptide (Lys-Gly) (interchain with G-Cter in SUMO2) cross-links involve residues Lys412 and Lys458. Residues 575–584 show a composition bias toward basic and acidic residues; the sequence is EHSELSERRS. The segment at 684 to 1834 is interaction with PLK1 and TERF2-TERF2IP; that stretch reads MVNNPHLSDV…PRGKKKVERN (1151 aa). One can recognise a BTB domain in the interval 691–764; the sequence is SDVQFQTDSG…LYTADTGLPP (74 aa). The stretch at 801-870 forms a coiled coil; the sequence is EEKEAENCES…QRKLLQEERA (70 aa). 2 disordered regions span residues 826 to 846 and 902 to 1151; these read EEEEAETLLKSKDHEEDQENV and KVEE…EDEV. Glycyl lysine isopeptide (Lys-Gly) (interchain with G-Cter in SUMO2) cross-links involve residues Lys835, Lys902, and Lys970. 2 stretches are compositionally biased toward basic and acidic residues: residues 902–916 and 965–979; these read KVEEMEPLEPGRDEA and CQAERKEGSLPHSDD. The segment covering 986–1002 has biased composition (polar residues); that stretch reads LFSSTQGEISEPSQITS. Residues 1011–1020 are compositionally biased toward basic and acidic residues; it reads VRERGLEVSH. Residues Ser1028, Ser1044, and Ser1070 each carry the phosphoserine modification. A compositionally biased stretch (polar residues) spans 1059-1073; the sequence is PRSRGGTSQVGSPTL. Glycyl lysine isopeptide (Lys-Gly) (interchain with G-Cter in SUMO2) cross-links involve residues Lys1081 and Lys1093. Over residues 1094 to 1111 the composition is skewed to basic and acidic residues; it reads EPGHQKGKERRSVLECRN. Residues Lys1112 and Lys1120 each participate in a glycyl lysine isopeptide (Lys-Gly) (interchain with G-Cter in SUMO2) cross-link. At Ser1121 the chain carries Phosphoserine. The segment covering 1124-1133 has biased composition (polar residues); it reads IDLTQSNPDH. The residue at position 1135 (Ser1135) is a Phosphoserine. Residues Lys1169, Lys1179, and Lys1180 each participate in a glycyl lysine isopeptide (Lys-Gly) (interchain with G-Cter in SUMO2) cross-link. Ser1185 is subject to Phosphoserine. Disordered stretches follow at residues 1195–1504 and 1516–1564; these read IDVD…SRPS and GEEQ…TPMP. Polar residues-rich tracts occupy residues 1245 to 1254 and 1269 to 1279; these read PSEASTTDTS and CSSQTQISSLR. Residues 1328 to 1648 form an interaction with MUS81 region; the sequence is VSPGTSDGRR…AGVHAQQEAT (321 aa). A compositionally biased stretch (basic residues) spans 1338–1350; sequence QGHRSPSRPHPGG. The span at 1351-1362 shows a compositional bias: low complexity; it reads HPHSSPLAPHPI. Acidic residues predominate over residues 1394 to 1403; sequence EVGDSDDEQE. Over residues 1457–1468 the composition is skewed to basic and acidic residues; it reads RMNEAADSRDCR. Phosphoserine is present on residues Ser1464 and Ser1469. The segment covering 1481 to 1504 has biased composition (polar residues); it reads SCTTQRKLQEKSSGAGSLGNSRPS. Glycyl lysine isopeptide (Lys-Gly) (interchain with G-Cter in SUMO2) cross-links involve residues Lys1575 and Lys1576. The tract at residues 1605–1746 is disordered; it reads TLDSDSEDES…EGEVSASQAA (142 aa). Ser1610 carries the phosphoserine modification. The tract at residues 1632–1834 is interaction with SLX1; the sequence is QTYKPSRAGV…PRGKKKVERN (203 aa). Residues 1654-1672 show a composition bias toward basic residues; the sequence is HRPKGPAKTKGPRHQRKHH. Residue Lys1657 forms a Glycyl lysine isopeptide (Lys-Gly) (interchain with G-Cter in SUMO2) linkage. Residues 1706–1730 show a composition bias toward low complexity; sequence SVDGSDSSLSSQSSSSCEFGAAFES.

Belongs to the SLX4 family. As to quaternary structure, forms a heterodimer with SLX1A/GIYD1. Interacts with ERCC4/XPF; catalytic subunit of the ERCC4-ERCC1 endonuclease. Interacts with MUS81; catalytic subunit of the MUS81-EME1 endonuclease. Interacts with MSH2; component of the MSH2-MSH3 mismatch repair complex. Interacts with TERF2-TERF2IP. Interacts with PLK1 and SLX4IP.

The protein resides in the nucleus. Regulatory subunit that interacts with and increases the activity of different structure-specific endonucleases. Has several distinct roles in protecting genome stability by resolving diverse forms of deleterious DNA structures originating from replication and recombination intermediates and from DNA damage. Component of the SLX1-SLX4 structure-specific endonuclease that resolves DNA secondary structures generated during DNA repair and recombination. Has endonuclease activity towards branched DNA substrates, introducing single-strand cuts in duplex DNA close to junctions with ss-DNA. Has a preference for 5'-flap structures, and promotes symmetrical cleavage of static and migrating Holliday junctions (HJs). Resolves HJs by generating two pairs of ligatable, nicked duplex products. Interacts with the structure-specific ERCC4-ERCC1 endonuclease and promotes the cleavage of bubble structures. Interacts with the structure-specific MUS81-EME1 endonuclease and promotes the cleavage of 3'-flap and replication fork-like structures. SLX4 is required for recovery from alkylation-induced DNA damage and is involved in the resolution of DNA double-strand breaks. In Homo sapiens (Human), this protein is Structure-specific endonuclease subunit SLX4 (SLX4).